A 622-amino-acid chain; its full sequence is Polymerase acidic protein (622 aa).

Belongs to the influenza viruses PA family. RNA polymerase is composed of three subunits: PA, PB1 and PB2.

It localises to the virion. The protein resides in the host nucleus. In terms of biological role, subunit of the RNA-dependent RNA polymerase which is responsible for replication and transcription of virus RNA segments. The transcription of viral mRNAs occurs by a unique mechanism called cap-snatching. 5' methylated caps of cellular mRNAs are cleaved after 10-13 nucleotides by PA. In turn, these short capped RNAs are used as primers by PB1 for transcription of viral mRNAs. During virus replication, PB1 initiates RNA synthesis and copy vRNA into complementary RNA (cRNA) which in turn serves as a template for the production of more vRNAs. The sequence is that of Polymerase acidic protein from Thogoto virus (isolate SiAr 126) (Tho).